A 211-amino-acid polypeptide reads, in one-letter code: MRDIVIIGHKAKTSGDFSLNDLPGSAGRMDILCRCVSSALFLSFGMRRDVNVHLLLLGEPDPGKIIRFEGLHLRYLNPDERSSGSLIQKALLKNAAGQDIRSTPGVWTRTGDLNSLLASFEGRTLLYLREDGKDFREIAREIQDPVFILGDHTGVTEEEEKQLLEAGAQVISVGPISLHSNHCITLIHNELDRAEAERGEIPGGNISRPED.

Residues Leu-128, Gly-150, and Cys-183 each coordinate S-adenosyl-L-methionine.

It belongs to the methyltransferase superfamily. TrmY family. Homodimer.

The protein localises to the cytoplasm. The catalysed reaction is pseudouridine(54) in tRNA + S-adenosyl-L-methionine = N(1)-methylpseudouridine(54) in tRNA + S-adenosyl-L-homocysteine + H(+). Its function is as follows. Specifically catalyzes the N1-methylation of pseudouridine at position 54 (Psi54) in tRNAs. The polypeptide is tRNA (pseudouridine(54)-N(1))-methyltransferase (Methanosarcina mazei (strain ATCC BAA-159 / DSM 3647 / Goe1 / Go1 / JCM 11833 / OCM 88) (Methanosarcina frisia)).